A 243-amino-acid polypeptide reads, in one-letter code: 3-deoxy-manno-octulosonate cytidylyltransferase (243 aa).

The protein belongs to the KdsB family.

The protein resides in the cytoplasm. The catalysed reaction is 3-deoxy-alpha-D-manno-oct-2-ulosonate + CTP = CMP-3-deoxy-beta-D-manno-octulosonate + diphosphate. The protein operates within nucleotide-sugar biosynthesis; CMP-3-deoxy-D-manno-octulosonate biosynthesis; CMP-3-deoxy-D-manno-octulosonate from 3-deoxy-D-manno-octulosonate and CTP: step 1/1. Activates KDO (a required 8-carbon sugar) for incorporation into bacterial lipopolysaccharide in Gram-negative bacteria. In Wigglesworthia glossinidia brevipalpis, this protein is 3-deoxy-manno-octulosonate cytidylyltransferase.